Reading from the N-terminus, the 148-residue chain is Large ribosomal subunit protein bL19 (148 aa).

It belongs to the bacterial ribosomal protein bL19 family.

In terms of biological role, this protein is located at the 30S-50S ribosomal subunit interface and may play a role in the structure and function of the aminoacyl-tRNA binding site. The polypeptide is Large ribosomal subunit protein bL19 (Beijerinckia indica subsp. indica (strain ATCC 9039 / DSM 1715 / NCIMB 8712)).